The primary structure comprises 72 residues: Alpha-elapitoxin-Dpp2c (72 aa).

Disulfide bonds link Cys-3–Cys-21, Cys-14–Cys-42, Cys-27–Cys-31, Cys-46–Cys-57, and Cys-58–Cys-63.

It belongs to the three-finger toxin family. Long-chain subfamily. Type II alpha-neurotoxin sub-subfamily. Expressed by the venom gland.

The protein resides in the secreted. Functionally, binds with high affinity to muscular (alpha-1/CHRNA1) and neuronal (alpha-7/CHRNA7) nicotinic acetylcholine receptor (nAChR) and inhibits acetylcholine from binding to the receptor, thereby impairing neuromuscular and neuronal transmission. The protein is Alpha-elapitoxin-Dpp2c of Dendroaspis polylepis polylepis (Black mamba).